A 508-amino-acid chain; its full sequence is Lysine--tRNA ligase (508 aa).

Glutamate 418 and glutamate 425 together coordinate Mg(2+).

The protein belongs to the class-II aminoacyl-tRNA synthetase family. As to quaternary structure, homodimer. Mg(2+) serves as cofactor.

It localises to the cytoplasm. The catalysed reaction is tRNA(Lys) + L-lysine + ATP = L-lysyl-tRNA(Lys) + AMP + diphosphate. The protein is Lysine--tRNA ligase of Burkholderia mallei (strain NCTC 10247).